A 199-amino-acid chain; its full sequence is Large ribosomal subunit protein bL25 (199 aa).

Belongs to the bacterial ribosomal protein bL25 family. CTC subfamily. Part of the 50S ribosomal subunit; part of the 5S rRNA/L5/L18/L25 subcomplex. Contacts the 5S rRNA. Binds to the 5S rRNA independently of L5 and L18.

Functionally, this is one of the proteins that binds to the 5S RNA in the ribosome where it forms part of the central protuberance. This is Large ribosomal subunit protein bL25 from Rickettsia akari (strain Hartford).